Consider the following 302-residue polypeptide: Sulfate adenylyltransferase subunit 2 (302 aa).

The protein belongs to the PAPS reductase family. CysD subfamily. As to quaternary structure, heterodimer composed of CysD, the smaller subunit, and CysN.

The enzyme catalyses sulfate + ATP + H(+) = adenosine 5'-phosphosulfate + diphosphate. It participates in sulfur metabolism; hydrogen sulfide biosynthesis; sulfite from sulfate: step 1/3. In terms of biological role, with CysN forms the ATP sulfurylase (ATPS) that catalyzes the adenylation of sulfate producing adenosine 5'-phosphosulfate (APS) and diphosphate, the first enzymatic step in sulfur assimilation pathway. APS synthesis involves the formation of a high-energy phosphoric-sulfuric acid anhydride bond driven by GTP hydrolysis by CysN coupled to ATP hydrolysis by CysD. This is Sulfate adenylyltransferase subunit 2 from Escherichia coli O7:K1 (strain IAI39 / ExPEC).